Here is a 63-residue protein sequence, read N- to C-terminus: MKLSLLSVELALLIATTLPLCWAAALPVGLGVGLDYCNSSCTRAFDCLGQCGRCDFHKLQCVH.

Positions 1-23 (MKLSLLSVELALLIATTLPLCWA) are cleaved as a signal peptide. The propeptide occupies 24-35 (AALPVGLGVGLD). Intrachain disulfides connect Cys-37-Cys-51, Cys-41-Cys-54, and Cys-47-Cys-61.

Its function is as follows. This necrosis-inducing peptide induces a hypersensitive response on Cf-9 tomato genotypes. Race-specific elicitors are compounds which only induce defense responses in genotypes of host plants which are resistant to the pathogenic race that produces the elicitor, but not in susceptible genotypes. This chain is Race-specific elicitor A9 (AVR9), found in Passalora fulva (Tomato leaf mold).